The following is a 383-amino-acid chain: uncharacterized protein (383 aa).

The protein belongs to the peptidase M20 family.

This is an uncharacterized protein from Staphylococcus haemolyticus (strain JCSC1435).